Here is a 140-residue protein sequence, read N- to C-terminus: Large ribosomal subunit protein bL17 (140 aa).

It belongs to the bacterial ribosomal protein bL17 family. As to quaternary structure, part of the 50S ribosomal subunit. Contacts protein L32.

This chain is Large ribosomal subunit protein bL17, found in Rhizobium etli (strain CIAT 652).